Here is a 397-residue protein sequence, read N- to C-terminus: Vacuolar protein sorting-associated protein 37A (397 aa).

S18 carries the phosphoserine modification. Residues 308 to 397 enclose the VPS37 C-terminal domain; sequence KSTFEKKMQR…AMHSQFHAPL (90 aa).

It belongs to the VPS37 family. Component of the ESCRT-I complex (endosomal sorting complex required for transport I) which consists of TSG101, VPS28, a VPS37 protein (VPS37A to -D) and MVB12A or MVB12B in a 1:1:1:1 stoichiometry. Interacts with TSG101, VPS28 and HGS. Component of an ESCRT-I complex (endosomal sorting complex required for transport I) which consists of TSG101, VPS28, VPS37A and UBAP1 in a 1:1:1:1 stoichiometry.

The protein localises to the late endosome membrane. Its subcellular location is the nucleus. Its function is as follows. Component of the ESCRT-I complex, a regulator of vesicular trafficking process. Required for the sorting of endocytic ubiquitinated cargos into multivesicular bodies. May be involved in cell growth and differentiation. The protein is Vacuolar protein sorting-associated protein 37A (Vps37a) of Mus musculus (Mouse).